Consider the following 899-residue polypeptide: Toll-like receptor 4 (899 aa).

A signal peptide spans 1 to 46 (MCPLQIHVLHLIQGNQKNRKGKYVNMTRQLWYILPLLFLLCHCVTS). Asn-25, Asn-75, Asn-83, and Asn-93 each carry an N-linked (GlcNAc...) asparagine glycan. Residues 47–702 (ERRCYFSKIS…LERNCRSYTA (656 aa)) are Extracellular-facing. LRR repeat units lie at residues 83 to 103 (NESV…PDLP), 104 to 126 (RSLL…AFAR), 128 to 150 (QNLT…LTAG), 155 to 179 (LTRL…VLSD), 181 to 202 (VSLN…MRKI), 203 to 229 (HALK…YFQN), and 230 to 253 (VHGI…TFSY). N-linked (GlcNAc...) asparagine glycans are attached at residues Asn-129, Asn-137, Asn-146, and Asn-168. 4 N-linked (GlcNAc...) asparagine glycosylation sites follow: Asn-237, Asn-256, Asn-275, and Asn-313. LRR repeat units follow at residues 257-282 (LTHL…DLKN), 313-336 (NTSL…VLMY), 338-360 (PKTL…ALET), and 363-386 (LVNL…IFSN). Residues Asn-388, Asn-432, and Asn-463 are each glycosylated (N-linked (GlcNAc...) asparagine). LRR repeat units follow at residues 468–493 (HYPL…VFYD), 501–524 (LEGL…FFDY), 526–549 (TGLK…EKGE), 554–577 (LLKL…ILRN), 579–601 (ISLE…LKHI), 602–624 (KGLR…VMRE), and 631–654 (SSNL…HFLR). Asn-516 carries an N-linked (GlcNAc...) asparagine glycan. 3 N-linked (GlcNAc...) asparagine glycosylation sites follow: Asn-633, Asn-637, and Asn-668. Residues 703–723 (VIVLFSCVFVILLTVIVCGVV) traverse the membrane as a helical segment. Topologically, residues 724–899 (YRYRWKLRYL…WRKLRDPISM (176 aa)) are cytoplasmic. Residues 756 to 897 (YEFDAFISYA…IFWRKLRDPI (142 aa)) enclose the TIR domain.

It belongs to the Toll-like receptor family. Expressed in all tissues tested. The highest expression is in the hepatopancreas, with moderate expression in the gills, and low expression in the gonads, adductor muscle, hemocytes, and mantle.

The protein localises to the cell membrane. Functionally, may be involved in the innate immune response. In Pinctada imbricata (Atlantic pearl-oyster), this protein is Toll-like receptor 4.